Here is a 185-residue protein sequence, read N- to C-terminus: HTH-type transcriptional regulator SA2364 (185 aa).

One can recognise an HTH tetR-type domain in the interval 6–66 (KENRQRIEEI…YVIQRDLDIF (61 aa)). Positions 29 to 48 (SMNRIAKELGIGMGTLYRHF) form a DNA-binding region, H-T-H motif.

The polypeptide is HTH-type transcriptional regulator SA2364 (Staphylococcus aureus (strain N315)).